Consider the following 588-residue polypeptide: Pectinesterase 4 (588 aa).

A signal peptide spans 1-24 (MIGKVVVSVASILLIVGVAIGVVA). N-linked (GlcNAc...) asparagine glycosylation is found at N86, N206, and N342. Substrate-binding residues include T353 and Q383. The active-site Proton donor is D406. D427 acts as the Nucleophile in catalysis. 2 residues coordinate substrate: R496 and W498.

It in the N-terminal section; belongs to the PMEI family. In the C-terminal section; belongs to the pectinesterase family. Expressed in pollen grains and pollen tubes.

Its subcellular location is the secreted. The protein localises to the cell wall. The catalysed reaction is [(1-&gt;4)-alpha-D-galacturonosyl methyl ester](n) + n H2O = [(1-&gt;4)-alpha-D-galacturonosyl](n) + n methanol + n H(+). Its pathway is glycan metabolism; pectin degradation; 2-dehydro-3-deoxy-D-gluconate from pectin: step 1/5. Functionally, acts in the modification of cell walls via demethylesterification of cell wall pectin. Plays an important role in growth of pollen tubes in female floral tissues, possibly via enhancing the interaction between the pollen tube and female floral tissues by modification of the cell walls. This is Pectinesterase 4 (PME4) from Arabidopsis thaliana (Mouse-ear cress).